The following is a 271-amino-acid chain: Tryptophan synthase alpha chain (271 aa).

Active-site proton acceptor residues include Glu49 and Asp60.

The protein belongs to the TrpA family. Tetramer of two alpha and two beta chains.

The enzyme catalyses (1S,2R)-1-C-(indol-3-yl)glycerol 3-phosphate + L-serine = D-glyceraldehyde 3-phosphate + L-tryptophan + H2O. Its pathway is amino-acid biosynthesis; L-tryptophan biosynthesis; L-tryptophan from chorismate: step 5/5. Functionally, the alpha subunit is responsible for the aldol cleavage of indoleglycerol phosphate to indole and glyceraldehyde 3-phosphate. The sequence is that of Tryptophan synthase alpha chain from Aromatoleum aromaticum (strain DSM 19018 / LMG 30748 / EbN1) (Azoarcus sp. (strain EbN1)).